The primary structure comprises 103 residues: MAVQQKIRIKLKSYDHSLVDKWALKIIDVVKQTEAIIFGPIPLPTKTHVYTVNRSPHVDKKSREQFAFSSHKRLIEIINPTARTIDMLMKLELPSGVDVEIKS.

Belongs to the universal ribosomal protein uS10 family. As to quaternary structure, part of the 30S ribosomal subunit.

In terms of biological role, involved in the binding of tRNA to the ribosomes. In Chlorobaculum tepidum (strain ATCC 49652 / DSM 12025 / NBRC 103806 / TLS) (Chlorobium tepidum), this protein is Small ribosomal subunit protein uS10.